A 179-amino-acid chain; its full sequence is Large ribosomal subunit protein uL5 (179 aa).

In terms of assembly, contacts the P site tRNA. Forms a bridge to the 30S subunit in the 70S ribosome. Part of the 50S ribosomal subunit. Part of the 5S rRNA/L5/L18 subcomplex; in this organism only 2 proteins, L5 and L18 have been shown to be part of the 5S rRNA subcomplex, unlike E.coli and T.thermophilus where L25 (TL5) is also found. Has been shown to bind 5S rRNA.

Its function is as follows. This is one of the proteins that bind and probably mediate the attachment of the 5S RNA into the large ribosomal subunit, where it forms part of the central protuberance. In the 70S ribosome it contacts protein S13 of the 30S subunit (bridge B1b), connecting the 2 subunits; this bridge is implicated in subunit movement. Contacts the P site tRNA; the 5S rRNA and some of its associated proteins might help stabilize positioning of ribosome-bound tRNAs. The polypeptide is Large ribosomal subunit protein uL5 (rplE) (Geobacillus stearothermophilus (Bacillus stearothermophilus)).